The primary structure comprises 357 residues: Actin, cytoplasmic (357 aa).

Belongs to the actin family. Post-translationally, met-1 may be removed after translation.

Its subcellular location is the cytoplasm. The protein localises to the cytoskeleton. The enzyme catalyses ATP + H2O = ADP + phosphate + H(+). Functionally, actins are highly conserved proteins that are involved in various types of cell motility and are ubiquitously expressed in all eukaryotic cells. This chain is Actin, cytoplasmic, found in Oxytricha fallax.